We begin with the raw amino-acid sequence, 710 residues long: Protein CNGC15a (710 aa).

The next 6 helical transmembrane spans lie at 85-105 (IFLA…YLPV), 115-135 (SIGL…FYII), 174-194 (LWSD…AVIP), 207-226 (VVRL…IYPL), 248-268 (YLTL…LLSI), and 368-388 (AEIN…ALLI). 474 to 559 (LFDQMDDRML…WALDPRPTAV (86 aa)) is an a nucleoside 3',5'-cyclic phosphate binding site.

This sequence belongs to the cyclic nucleotide-gated cation channel (TC 1.A.1.5) family. As to quaternary structure, interacts (via N-terminus) with DMI1 (via c-terminus). The Nod factor has no effect on this interaction, implying that the complex is maintained after activation. Expressed in roots, stems, leaves, flowers and pods.

The protein localises to the nucleus membrane. In terms of biological role, cyclic nucleotide-gated channel involved in the establishment of both rhizobial and mycorrhizal associations. Required for full activation of nuclear-localized Ca(2+) oscillations by Nod and Myc factors. Simultaneous activation of the K(+)-permeable channel DMI1 and the Ca(2+) channel CNGC15 can give rise to sustained Ca(2+) oscillations. May function during fertilization in both female and male gametophytic Ca(2+) signaling. The protein is Protein CNGC15a of Medicago truncatula (Barrel medic).